A 322-amino-acid polypeptide reads, in one-letter code: 4-diphosphocytidyl-2-C-methyl-D-erythritol kinase (322 aa).

Lys-27 is a catalytic residue. 112–122 (PVAGGMAGGSA) is an ATP binding site. The active site involves Asp-154.

It belongs to the GHMP kinase family. IspE subfamily.

The catalysed reaction is 4-CDP-2-C-methyl-D-erythritol + ATP = 4-CDP-2-C-methyl-D-erythritol 2-phosphate + ADP + H(+). It participates in isoprenoid biosynthesis; isopentenyl diphosphate biosynthesis via DXP pathway; isopentenyl diphosphate from 1-deoxy-D-xylulose 5-phosphate: step 3/6. In terms of biological role, catalyzes the phosphorylation of the position 2 hydroxy group of 4-diphosphocytidyl-2C-methyl-D-erythritol. The sequence is that of 4-diphosphocytidyl-2-C-methyl-D-erythritol kinase from Mycolicibacterium smegmatis (strain ATCC 700084 / mc(2)155) (Mycobacterium smegmatis).